The following is a 296-amino-acid chain: MSDKLRQIAFYGKGGIGKSTTSQNTLAALTEMGQKILIVGCDPKADSTRLILHSKAQDTVLSLAAEAGSVEDLEIEDVMKVGYRDIRCVESGGPEPGVGCAGRGVITSINFLEENGAYDGVDYVSYDVLGDVVCGGFAMPIRENKAQEIYIVMSGEMMAMYAANNISKGILKYANSGGVRLGGLVCNERQTDKELELAEALAGKLGTKLIHFVPRDNIVQHAELRRMTVLEYAPESKQAEEYRQLAQKIHANGGNGTIPTPITMDELEEMLMEFGIMSAVDESVIGKSAAELAAAV.

Residue glycine 12–serine 19 participates in ATP binding. Position 100 (cysteine 100) interacts with [4Fe-4S] cluster. Arginine 103 is modified (ADP-ribosylarginine; by dinitrogenase reductase ADP-ribosyltransferase). Cysteine 134 is a binding site for [4Fe-4S] cluster.

The protein belongs to the NifH/BchL/ChlL family. Homodimer. [4Fe-4S] cluster is required as a cofactor. In terms of processing, the reversible ADP-ribosylation of Arg-103 inactivates the nitrogenase reductase and regulates nitrogenase activity.

The catalysed reaction is N2 + 8 reduced [2Fe-2S]-[ferredoxin] + 16 ATP + 16 H2O = H2 + 8 oxidized [2Fe-2S]-[ferredoxin] + 2 NH4(+) + 16 ADP + 16 phosphate + 6 H(+). Its function is as follows. The key enzymatic reactions in nitrogen fixation are catalyzed by the nitrogenase complex, which has 2 components: the iron protein and the molybdenum-iron protein. The chain is Nitrogenase iron protein from Acidithiobacillus ferrooxidans (strain ATCC 23270 / DSM 14882 / CIP 104768 / NCIMB 8455) (Ferrobacillus ferrooxidans (strain ATCC 23270)).